The chain runs to 293 residues: Ribosomal RNA small subunit methyltransferase A (293 aa).

Residues Asn38, Val40, Gly65, Glu86, Asp116, and Asn135 each coordinate S-adenosyl-L-methionine.

Belongs to the class I-like SAM-binding methyltransferase superfamily. rRNA adenine N(6)-methyltransferase family. RsmA subfamily.

The protein localises to the cytoplasm. The catalysed reaction is adenosine(1518)/adenosine(1519) in 16S rRNA + 4 S-adenosyl-L-methionine = N(6)-dimethyladenosine(1518)/N(6)-dimethyladenosine(1519) in 16S rRNA + 4 S-adenosyl-L-homocysteine + 4 H(+). Its function is as follows. Specifically dimethylates two adjacent adenosines (A1518 and A1519) in the loop of a conserved hairpin near the 3'-end of 16S rRNA in the 30S particle. May play a critical role in biogenesis of 30S subunits. This chain is Ribosomal RNA small subunit methyltransferase A, found in Nocardia farcinica (strain IFM 10152).